Reading from the N-terminus, the 156-residue chain is Longistatin (156 aa).

Residues 1 to 21 form the signal peptide; sequence MTHRRLLWALCVAALLGVVAA. 2 consecutive EF-hand domains span residues 70 to 105 and 123 to 156; these read SQDELYFYYFRMHDFDNNNKLDGQEMMAAMFHTNHH and DIASYVDSVLRADKNQDGFISYPELRTSDLTNQI. Ca(2+) contacts are provided by Asp83, Asp85, Asn87, Lys89, Glu94, Asp135, Asn137, Asp139, Phe141, and Glu146.

Interacts with host fibrin. Interacts with human RAGE/AGER. As to expression, saliva (at protein level). Salivary gland (at protein level). Not detected in midgut, ovary, trachea, Malpighian tubule system, synganglion and cuticle.

Its subcellular location is the secreted. It localises to the cytoplasm. Its activity is regulated as follows. Resistant to inhibition by host SERPINE1. Inhibited by PMSF, aprotinin, antipain and leupeptin. Inhibited by Zn(2+). In terms of biological role, anticoagulant and fibrinolytic protease that modulates blood feeding of ticks on vertebrate hosts. Degrades host fibrinogen and delays fibrin clot formation. Promotes lysis of fibrin clots in the host by activating host plasminogen in the presence of soluble fibrin. Binds Ca(2+). Hydrolyzes serine protease-specific substrates. Required for the formation of a blood pool, an accumulation of blood and tissue fluid developed at the tick's feeding site. Blocks activation of host AGER/RAGE. Reduces AGER/RAGE-dependent production of reactive oxygen species (ROS) in human endothelial cells. Prevents AGER/RAGE-dependent activation of NF-kappa-B and suppresses expression of adhesion molecules, such as VCAM1, ICAM1 and SELE, and secretion of cytokines, such as CSF3/GCSF and TGF-beta, in human endothelial cells. Suppresses RAGE/AGER-mediated migration of mouse peritoneal resident cells. Reduces AGER/RAGE-mediated inflammation in mice tissues. The sequence is that of Longistatin from Haemaphysalis longicornis (Bush tick).